A 460-amino-acid polypeptide reads, in one-letter code: Proton extrusion protein PxcA (460 aa).

Residues 84-194 (RLPDPEQNGS…KTNLDNSNAP (111 aa)) are disordered. The segment covering 114–136 (NDGKDAENGRQSRDPSILEKLEF) has biased composition (basic and acidic residues). Over residues 167–194 (LTSSQPEPSDPSIKTNLAKTNLDNSNAP) the composition is skewed to polar residues. The next 4 helical transmembrane spans lie at 242 to 262 (FLLL…HFLF), 337 to 357 (GLKN…LILI), 373 to 393 (IYGL…DVFV), and 420 to 440 (FIYG…KYWI).

Belongs to the CemA family.

Its subcellular location is the cell inner membrane. In terms of biological role, required for H(+) efflux immediately after light irradiation to form a rapid H(+) concentration gradient across the thylakoid membranes. Together with PxcL, contributes to transient H(+) uptake following dark to light transition. The sequence is that of Proton extrusion protein PxcA from Synechococcus sp. (strain JA-3-3Ab) (Cyanobacteria bacterium Yellowstone A-Prime).